We begin with the raw amino-acid sequence, 503 residues long: Probable cytosol aminopeptidase (503 aa).

The Mn(2+) site is built by Lys-268 and Asp-273. Residue Lys-280 is part of the active site. 3 residues coordinate Mn(2+): Asp-291, Asp-350, and Glu-352. Arg-354 is an active-site residue.

It belongs to the peptidase M17 family. Requires Mn(2+) as cofactor.

The protein resides in the cytoplasm. It catalyses the reaction Release of an N-terminal amino acid, Xaa-|-Yaa-, in which Xaa is preferably Leu, but may be other amino acids including Pro although not Arg or Lys, and Yaa may be Pro. Amino acid amides and methyl esters are also readily hydrolyzed, but rates on arylamides are exceedingly low.. It carries out the reaction Release of an N-terminal amino acid, preferentially leucine, but not glutamic or aspartic acids.. Its function is as follows. Presumably involved in the processing and regular turnover of intracellular proteins. Catalyzes the removal of unsubstituted N-terminal amino acids from various peptides. The chain is Probable cytosol aminopeptidase from Methylobacterium radiotolerans (strain ATCC 27329 / DSM 1819 / JCM 2831 / NBRC 15690 / NCIMB 10815 / 0-1).